The sequence spans 432 residues: D-amino acid dehydrogenase (432 aa).

An FAD-binding site is contributed by Val3–Trp17.

The protein belongs to the DadA oxidoreductase family. Requires FAD as cofactor.

It catalyses the reaction a D-alpha-amino acid + A + H2O = a 2-oxocarboxylate + AH2 + NH4(+). The protein operates within amino-acid degradation; D-alanine degradation; NH(3) and pyruvate from D-alanine: step 1/1. Oxidative deamination of D-amino acids. The protein is D-amino acid dehydrogenase of Escherichia fergusonii (strain ATCC 35469 / DSM 13698 / CCUG 18766 / IAM 14443 / JCM 21226 / LMG 7866 / NBRC 102419 / NCTC 12128 / CDC 0568-73).